Reading from the N-terminus, the 344-residue chain is tRNA N6-adenosine threonylcarbamoyltransferase (344 aa).

Residues histidine 111 and histidine 115 each coordinate Fe cation. Substrate-binding positions include 134 to 138, aspartate 167, glycine 180, aspartate 184, and asparagine 277; that span reads LVSGG. Residue aspartate 305 participates in Fe cation binding.

Belongs to the KAE1 / TsaD family. Requires Fe(2+) as cofactor.

The protein localises to the cytoplasm. The enzyme catalyses L-threonylcarbamoyladenylate + adenosine(37) in tRNA = N(6)-L-threonylcarbamoyladenosine(37) in tRNA + AMP + H(+). Functionally, required for the formation of a threonylcarbamoyl group on adenosine at position 37 (t(6)A37) in tRNAs that read codons beginning with adenine. Is involved in the transfer of the threonylcarbamoyl moiety of threonylcarbamoyl-AMP (TC-AMP) to the N6 group of A37, together with TsaE and TsaB. TsaD likely plays a direct catalytic role in this reaction. In Microcystis aeruginosa (strain NIES-843 / IAM M-2473), this protein is tRNA N6-adenosine threonylcarbamoyltransferase.